Consider the following 158-residue polypeptide: 6,7-dimethyl-8-ribityllumazine synthase (158 aa).

5-amino-6-(D-ribitylamino)uracil is bound by residues phenylalanine 22, 57–59 (AVE), and 81–83 (AVI). Residue 86 to 87 (GT) participates in (2S)-2-hydroxy-3-oxobutyl phosphate binding. The active-site Proton donor is histidine 89. Residue phenylalanine 114 participates in 5-amino-6-(D-ribitylamino)uracil binding. A (2S)-2-hydroxy-3-oxobutyl phosphate-binding site is contributed by arginine 128.

Belongs to the DMRL synthase family. In terms of assembly, forms an icosahedral capsid composed of 60 subunits, arranged as a dodecamer of pentamers.

It catalyses the reaction (2S)-2-hydroxy-3-oxobutyl phosphate + 5-amino-6-(D-ribitylamino)uracil = 6,7-dimethyl-8-(1-D-ribityl)lumazine + phosphate + 2 H2O + H(+). The protein operates within cofactor biosynthesis; riboflavin biosynthesis; riboflavin from 2-hydroxy-3-oxobutyl phosphate and 5-amino-6-(D-ribitylamino)uracil: step 1/2. In terms of biological role, catalyzes the formation of 6,7-dimethyl-8-ribityllumazine by condensation of 5-amino-6-(D-ribitylamino)uracil with 3,4-dihydroxy-2-butanone 4-phosphate. This is the penultimate step in the biosynthesis of riboflavin. The polypeptide is 6,7-dimethyl-8-ribityllumazine synthase (Shewanella putrefaciens (strain CN-32 / ATCC BAA-453)).